Here is a 79-residue protein sequence, read N- to C-terminus: Cytochrome c oxidase subunit 7A1, mitochondrial (79 aa).

Residues 1–21 constitute a mitochondrion transit peptide; the sequence is MQALRVSRALIRSFNTTARNR. Over 22–46 the chain is Mitochondrial matrix; the sequence is FQNRVPEKQKLFQEDNDIPLYLKGG. The chain crosses the membrane as a helical span at residues 47 to 75; the sequence is IVDNILYRVTMGLCLGGSAYSMYCLGWAS. Over 76 to 79 the chain is Mitochondrial intermembrane; sequence FPRN.

Belongs to the cytochrome c oxidase VIIa family. As to quaternary structure, component of the complex IV (CIV, cytochrome c oxidase), a multisubunit enzyme composed of 14 subunits. The complex is composed of a catalytic core of 3 subunits MT-CO1, MT-CO2 and MT-CO3, encoded in the mitochondrial DNA, and 11 supernumerary subunits COX4I1 (or COX4I2), COX5A, COX5B, COX6A2 (or COX6A1), COX6B1 (or COX6B2), COX6C, COX7A1 (or COX7A2), COX7B, COX7C, COX8B and NDUFA4, which are encoded in the nuclear genome. The complex exists as a monomer or a dimer and forms supercomplexes (SCs) in the inner mitochondrial membrane with NADH-ubiquinone oxidoreductase (complex I, CI) and ubiquinol-cytochrome c oxidoreductase (cytochrome b-c1 complex, complex III, CIII), resulting in different assemblies (supercomplex SCI(1)III(2)IV(1) and megacomplex MCI(2)III(2)IV(2)).

The protein localises to the mitochondrion inner membrane. It participates in energy metabolism; oxidative phosphorylation. Component of the mitochondrial respiratory complex IV (CIV, also named cytochrome c oxidase complex), the last enzyme in the mitochondrial electron transport chain which drives oxidative phosphorylation. The CIV complex is the component of the respiratory chain that catalyzes the reduction of oxygen to water. Acts as an assembly factor that specifically drives the homodimerization of CIV complexes, mediating the formation of mitochondrial respiratory supercomplexes (respirasomes) containing two CIV: supercomplxes with two molecules of CIV show improved activity. Despite being highly expressed in brown adipose tissue, not required for thermogenesis. This chain is Cytochrome c oxidase subunit 7A1, mitochondrial (COX7A1), found in Trachypithecus cristatus (Silvered leaf-monkey).